Consider the following 303-residue polypeptide: Lipoyl synthase (303 aa).

Residues cysteine 40, cysteine 45, cysteine 51, cysteine 67, cysteine 71, cysteine 74, and serine 280 each coordinate [4Fe-4S] cluster. Residues 53–269 (AVRKTATFMI…KEIALSKGFS (217 aa)) form the Radical SAM core domain.

It belongs to the radical SAM superfamily. Lipoyl synthase family. Requires [4Fe-4S] cluster as cofactor.

It localises to the cytoplasm. It catalyses the reaction [[Fe-S] cluster scaffold protein carrying a second [4Fe-4S](2+) cluster] + N(6)-octanoyl-L-lysyl-[protein] + 2 oxidized [2Fe-2S]-[ferredoxin] + 2 S-adenosyl-L-methionine + 4 H(+) = [[Fe-S] cluster scaffold protein] + N(6)-[(R)-dihydrolipoyl]-L-lysyl-[protein] + 4 Fe(3+) + 2 hydrogen sulfide + 2 5'-deoxyadenosine + 2 L-methionine + 2 reduced [2Fe-2S]-[ferredoxin]. It functions in the pathway protein modification; protein lipoylation via endogenous pathway; protein N(6)-(lipoyl)lysine from octanoyl-[acyl-carrier-protein]. Functionally, catalyzes the radical-mediated insertion of two sulfur atoms into the C-6 and C-8 positions of the octanoyl moiety bound to the lipoyl domains of lipoate-dependent enzymes, thereby converting the octanoylated domains into lipoylated derivatives. The protein is Lipoyl synthase of Halalkalibacterium halodurans (strain ATCC BAA-125 / DSM 18197 / FERM 7344 / JCM 9153 / C-125) (Bacillus halodurans).